The primary structure comprises 292 residues: Phosphatidylserine decarboxylase proenzyme (292 aa).

Residues Asp89, His146, and Ser252 each act as charge relay system; for autoendoproteolytic cleavage activity in the active site. Ser252 (schiff-base intermediate with substrate; via pyruvic acid; for decarboxylase activity) is an active-site residue. Ser252 bears the Pyruvic acid (Ser); by autocatalysis mark.

This sequence belongs to the phosphatidylserine decarboxylase family. PSD-B subfamily. Prokaryotic type I sub-subfamily. In terms of assembly, heterodimer of a large membrane-associated beta subunit and a small pyruvoyl-containing alpha subunit. Pyruvate serves as cofactor. Is synthesized initially as an inactive proenzyme. Formation of the active enzyme involves a self-maturation process in which the active site pyruvoyl group is generated from an internal serine residue via an autocatalytic post-translational modification. Two non-identical subunits are generated from the proenzyme in this reaction, and the pyruvate is formed at the N-terminus of the alpha chain, which is derived from the carboxyl end of the proenzyme. The autoendoproteolytic cleavage occurs by a canonical serine protease mechanism, in which the side chain hydroxyl group of the serine supplies its oxygen atom to form the C-terminus of the beta chain, while the remainder of the serine residue undergoes an oxidative deamination to produce ammonia and the pyruvoyl prosthetic group on the alpha chain. During this reaction, the Ser that is part of the protease active site of the proenzyme becomes the pyruvoyl prosthetic group, which constitutes an essential element of the active site of the mature decarboxylase.

The protein resides in the cell membrane. The catalysed reaction is a 1,2-diacyl-sn-glycero-3-phospho-L-serine + H(+) = a 1,2-diacyl-sn-glycero-3-phosphoethanolamine + CO2. It participates in phospholipid metabolism; phosphatidylethanolamine biosynthesis; phosphatidylethanolamine from CDP-diacylglycerol: step 2/2. Catalyzes the formation of phosphatidylethanolamine (PtdEtn) from phosphatidylserine (PtdSer). This is Phosphatidylserine decarboxylase proenzyme from Shewanella baltica (strain OS223).